Consider the following 369-residue polypeptide: Aspartate beta-hydroxylase domain-containing protein 2 (369 aa).

The Cytoplasmic segment spans residues methionine 1 to threonine 58. The chain crosses the membrane as a helical span at residues threonine 59–glycine 79. Residues arginine 80–arginine 369 lie on the Lumenal side of the membrane. An N-linked (GlcNAc...) asparagine glycan is attached at asparagine 211. The 2-oxoglutarate site is built by tryptophan 228 and serine 272. Histidine 283 lines the Fe cation pocket. Arginine 292 to histidine 294 provides a ligand contact to 2-oxoglutarate. Histidine 328 is a binding site for Fe cation. Arginine 341 provides a ligand contact to 2-oxoglutarate.

The protein belongs to the aspartyl/asparaginyl beta-hydroxylase family. It depends on Fe cation as a cofactor.

It localises to the membrane. May function as 2-oxoglutarate-dependent dioxygenase. This chain is Aspartate beta-hydroxylase domain-containing protein 2 (ASPHD2), found in Homo sapiens (Human).